The primary structure comprises 316 residues: Delta(1)-pyrroline-2-carboxylate reductase (316 aa).

Belongs to the ornithine cyclodeaminase/mu-crystallin family. As to quaternary structure, homodimer.

The enzyme catalyses L-proline + NAD(+) = 1-pyrroline-2-carboxylate + NADH + H(+). The catalysed reaction is L-proline + NADP(+) = 1-pyrroline-2-carboxylate + NADPH + H(+). In terms of biological role, catalyzes the reduction of Delta(1)-pyrroline-2-carboxylate (Pyr2C) to L-proline, using preferentially NADPH over NADH as the electron donor. Together with LhpH, is involved in a metabolic pathway that converts trans-3-hydroxy-L-proline (t3LHyp) to L-proline. To a much lesser extent, can also reduce Delta(1)-piperideine-2-carboxylate (Pip2C) to L-pipecolate in vitro; however, this activity has likely no physiological significance in vivo since C.psychrerythraea probably possesses no ability to metabolize D-lysine via the L-pipecolate pathway. Does not show ornithine cyclodeaminase (OCD) activity. The polypeptide is Delta(1)-pyrroline-2-carboxylate reductase (Colwellia psychrerythraea (strain 34H / ATCC BAA-681) (Vibrio psychroerythus)).